The chain runs to 827 residues: MVSAQLHFLCLLTLYLTCGYGEEGKFSGPLKPMTFSIFEGQEPSQVIFQFKTNPPAVTFELTGETDGIFKIEKDGLLYHTRALDRETRAVHHLQLAALDSHGAIVDGPVPITIEVKDINDNRPTFLQSKYEGSVRQNSRPGKPFMYVNATDLDDPATPNGQLFYQIVIQLPQINDVMYFQIDSKTGAISLTPEGSQELDPVKNPSYNLVVSVKDMGGQSENSFSDTTYVDISIRENIWKAPEPVEIRENSTDPHPIKITQVQWNDPGAQYSLVNKEKLSPFPFSIDQEGNIYVTQALDREEKNSHVFFATAKDENGKPLAYPLEIYVKVIDINDNPPTCLSPVTVFEVQENEPLGNSIGIFEAHDMDEANNINSILKYKLVDQTPKVPSDGLFLIGEYEGKVQLSKQSLKKQDSPQYNLSIEVSDVDFKTLCYIQVNVIDINDQIPIFETSNYGSKTLSEDTAIGSTILIIQATDADEPFTGSSKILYKIVQGDTEGRLEVVTDPTTNAGYVKIKKPLDFETQPVSSIVFQAENPEPLVKGIEYNASSFASFELIVTDVNEVPVFPQRIFQANVSEDAAVGSRVGNVTARDPEGLTVSYSLKGNMRGWLKIDSVTGEIFSAAPLDRETESVYRVQVVATEVGGSSLSSTADFHLVLTDVNDNPPRLAKDYTGLFFCHPLSAPGSLIFEVTDDDQQSLRRPKFTFALGREGLQSDWEVSKINGTHARLSTRHTRFEEQVYNIPIRINDGGQPPMEGTVFLPVTFCQCVEGSCFRPAGRQDGIPTVGMAVGILLTTFLVIGIILAVVFIRMRKDKVENPQSPENKPLRS.

A signal peptide spans 1 to 25 (MVSAQLHFLCLLTLYLTCGYGEEGK). Residues 26–786 (FSGPLKPMTF…RQDGIPTVGM (761 aa)) lie on the Extracellular side of the membrane. 7 Cadherin domains span residues 29 to 127 (PLKP…TFLQ), 128 to 243 (SKYE…APEP), 244 to 339 (VEIR…PPTC), 340 to 448 (LSPV…IPIF), 449 to 565 (ETSN…VPVF), 566 to 666 (PQRI…PPRL), and 667 to 776 (AKDY…RPAG). Residues Asn148, Asn249, Asn418, Asn545, Asn573, Asn586, and Asn721 are each glycosylated (N-linked (GlcNAc...) asparagine). Residues 787 to 807 (AVGILLTTFLVIGIILAVVFI) form a helical membrane-spanning segment. Residues 808–827 (RMRKDKVENPQSPENKPLRS) are Cytoplasmic-facing.

As to expression, highest expression is found in intestine with lower expression in spleen, bone marrow, lung and testis. No expression detected in liver, kidney, heart, brain or skeletal muscle. Expressed in precursor B-cells and myeloid cells.

The protein localises to the cell membrane. Cadherins are calcium-dependent cell adhesion proteins. They preferentially interact with themselves in a homophilic manner in connecting cells; cadherins may thus contribute to the sorting of heterogeneous cell types. LI-cadherin may have a role in the morphological organization of liver and intestine. The polypeptide is Cadherin-17 (Cdh17) (Mus musculus (Mouse)).